Here is a 576-residue protein sequence, read N- to C-terminus: MAEFPDDQAARLCDNCKKEIPVFNFTIHEIHCQRNIGVCPVCKEPFPKSDMDIHVATEHCQVTCKCNKKLEKRQLKQHVETECPLRLAVCQHCDLELSVVKLKEHEDYCGARTELCGSCGRNVLVKELQTHPAVCGRVEEEKRSEAAVPPEAYDEPWSQDRIWIASQLLRQIEALDPPMRLPGRPLRAFEADPFYSRTASQRGVTAHFPIQNNLFEEQERQERNRSHQSPKDSAENSAHLDFMLALSLQNEGQASSMVEQGFWESVPEADPARAGPTSLGDIKGAADETLLPCEFCEELYPEELLIDHQTSCNPSHALRSLNTGSSSIRGVEDPGAIFQNFLQQATSNQLDTLMGLSSSAAVEDSIIIPCEFCGVQLEEEVLFHHQDQCDQRPATANHRAMEGIPTQDSQPEDRSPELSRRRVKHQGDLSSGYMDDVKQESVKGSTYSLSPNRTMNNVSTCNRLLNSSGPRSDCQRSPPGVLKLNNSGSQDIRGRIRGSQNGPIASAHAPVIHSIRNLYPENLAPSFPHGSPGRFGASEGSRSSRVTPTAASYHSRAAKAKPPKQQGAGDAEEEEE.

Position 2 is an N-acetylalanine (Ala-2). Residues 27–103 form a TRAF-type zinc finger; that stretch reads IHEIHCQRNI…DLELSVVKLK (77 aa). A phosphoserine mark is found at Ser-278, Ser-320, Ser-326, Ser-327, Ser-409, Ser-415, Ser-430, and Ser-450. The disordered stretch occupies residues 402–432; it reads EGIPTQDSQPEDRSPELSRRRVKHQGDLSSG. Positions 411 to 420 are enriched in basic and acidic residues; it reads PEDRSPELSR. Disordered stretches follow at residues 465-491 and 529-576; these read LNSSGPRSDCQRSPPGVLKLNNSGSQD and HGSP…EEEE. Ser-531 carries the post-translational modification Phosphoserine. A compositionally biased stretch (polar residues) spans 540 to 552; the sequence is GSRSSRVTPTAAS.

In terms of assembly, interacts with MAVS, TICAM1, TRAF1, TRAF2, TRAF3 and TRAF6. As to expression, expressed in vascular smooth muscle cells.

Its function is as follows. Negative feedback regulator that controls excessive innate immune responses. Regulates both Toll-like receptor 4 (TLR4) and DDX58/RIG1-like helicases (RLH) pathways. May inhibit the LTR pathway by direct interaction with TRAF6 and attenuation of NF-kappa-B activation. May negatively regulate the RLH pathway downstream from MAVS and upstream of NF-kappa-B and IRF3. In Rattus norvegicus (Rat), this protein is TRAF-type zinc finger domain-containing protein 1 (Trafd1).